A 352-amino-acid chain; its full sequence is MKSEQLKQFERYAEAVGAERYRVTSIKMQADGRKQTFILDKKDGITRGFTPQEIEQRTPEMQRLQRRGENLYYTPLSDKKHHILIDDMNREKLERLIKDGYQPAAVLESSPGNYQAIITVSKLGTAHDKDVGNRLSDALNREYGDPKLSGAIHPHRAPGYENRKPKHQREDGSYPEVRLLKAERRECVKALALSSQIDAEYQRQAALKAQQPERTKAKPALELAAASGSAIDAYQRHYRDVLKRQRGGEVDLSRVDSMIAVRMRVTGHDQAAIEGAIRQCAPATRQKDEGRDWNDYAQRTARYAYSAAQPQAADLGKYRQQWEKLEGREPVRQQEQAKAQKIERDNSPGMSL.

Disordered regions lie at residues 145–172 (DPKL…REDG) and 318–352 (YRQQ…GMSL). Residues 318–332 (YRQQWEKLEGREPVR) are compositionally biased toward basic and acidic residues.

Its function is as follows. Functions as a primase with respect to replication at the (vegetative) origin of replication of pTF-FC2. The polypeptide is DNA primase (repB) (Acidithiobacillus ferrooxidans (Thiobacillus ferrooxidans)).